Consider the following 587-residue polypeptide: General negative regulator of transcription subunit 4 (587 aa).

The segment at 33–78 (CPLCIEPMDITDKNFFPCPCGYQICQFCYNNIRQNPELNGRCPACR) adopts an RING-type zinc-finger fold. The stretch at 94–128 (EELKMERAKLARKEKERKHREKERKENEYTNRKHL) forms a coiled coil. One can recognise an RRM domain in the interval 137–228 (NLVYVVGINP…YMDGRLIKAA (92 aa)). The C3H1-type zinc-finger motif lies at 229–256 (YGTTKYCSSYLRGLPCPNPNCMFLHEPG). A Glycyl lysine isopeptide (Lys-Gly) (interchain with G-Cter in ubiquitin) cross-link involves residue K270. T310 is subject to Phosphothreonine. A Phosphoserine modification is found at S312. T326 bears the Phosphothreonine mark. At S360 the chain carries Phosphoserine. Residues 370–412 (TLNDSLGHHTTPTTENTITSTTTTTNTNATSHSHGSKKKQSLA) form a disordered region. Residues 377 to 402 (HHTTPTTENTITSTTTTTNTNATSHS) show a composition bias toward low complexity.

In terms of assembly, forms a NOT protein complex that comprises NOT1, NOT2, NOT3, NOT4 and NOT5. Subunit of the 1.0 MDa CCR4-NOT core complex that contains CCR4, CAF1, NOT1, NOT2, NOT3, NOT4, NOT5, CAF40 and CAF130. In the complex interacts with NOT1. The core complex probably is part of a less characterized 1.9 MDa CCR4-NOT complex.

The protein localises to the cytoplasm. It localises to the nucleus. The enzyme catalyses S-ubiquitinyl-[E2 ubiquitin-conjugating enzyme]-L-cysteine + [acceptor protein]-L-lysine = [E2 ubiquitin-conjugating enzyme]-L-cysteine + N(6)-ubiquitinyl-[acceptor protein]-L-lysine.. The protein operates within protein modification; protein ubiquitination. Functionally, E3 ubiquitin-protein ligase component of the CCR4-NOT core complex, which in the nucleus seems to be a general transcription factor, and in the cytoplasm the major mRNA deadenylase involved in mRNA turnover. The NOT protein subcomplex negatively regulates the basal and activated transcription of many genes. Preferentially affects TC-type TATA element-dependent transcription. Could directly or indirectly inhibit component(s) of the general transcription machinery. In the cytoplasm, catalyzes monoubiquitination of RPS7/es7 in response to stalled ribosomes, initiating a HEL2-dependent response that activates the No-Go Decay (NGD) pathway. In Saccharomyces cerevisiae (strain ATCC 204508 / S288c) (Baker's yeast), this protein is General negative regulator of transcription subunit 4 (MOT2).